The chain runs to 547 residues: Fumarate reductase (CoM/CoB) subunit A (547 aa).

This sequence belongs to the FAD-dependent oxidoreductase 2 family. Subunit A of the heterodimeric fumarate reductase of methanogenic Archaea, composed of subunits A (TfrA) and B (TfrB). It depends on an oxidized flavin as a cofactor.

It localises to the cytoplasm. It carries out the reaction coenzyme B + coenzyme M + fumarate = coenzyme M-coenzyme B heterodisulfide + succinate. In terms of biological role, catalyzes the reduction of fumarate with reduced coenzyme M (CoM-S-H) and coenzyme B (CoB-S-H). In vitro, is able to reduces fumarate with reduced benzyl viologen, oxidize CoM-S-H and CoB-S-H to CoM-S-S-CoB with methylene blue, and reduce CoM-S-S-CoB with reduced benzyl viologen. The enzyme has specificity for the two thiol compounds as the CoB--CoM heterodisulfide reductase. The enzyme is very sensitive to oxygen. This is Fumarate reductase (CoM/CoB) subunit A from Methanothermobacter marburgensis (strain ATCC BAA-927 / DSM 2133 / JCM 14651 / NBRC 100331 / OCM 82 / Marburg) (Methanobacterium thermoautotrophicum).